The following is a 199-amino-acid chain: Transcriptional regulatory protein EntR (199 aa).

Residues lysine 3 to leucine 124 enclose the Response regulatory domain. Aspartate 8 carries the post-translational modification 4-aspartylphosphate. In terms of domain architecture, HTH luxR-type spans proline 133 to glycine 198. The segment at residues asparagine 157–arginine 176 is a DNA-binding region (H-T-H motif).

Functionally, may serve to repress the entericidin locus in C.freundii. In Citrobacter freundii, this protein is Transcriptional regulatory protein EntR (ecnR).